The following is a 637-amino-acid chain: Threonine--tRNA ligase (637 aa).

In terms of domain architecture, TGS spans 1-65 (MIAIQLPDGS…EADEALSIIT (65 aa)). Residues 246 to 537 (DHRKLGRELD…LIEEHAGALP (292 aa)) are catalytic. Residues C337, H388, and H514 each coordinate Zn(2+).

Belongs to the class-II aminoacyl-tRNA synthetase family. As to quaternary structure, homodimer. The cofactor is Zn(2+).

It is found in the cytoplasm. The enzyme catalyses tRNA(Thr) + L-threonine + ATP = L-threonyl-tRNA(Thr) + AMP + diphosphate + H(+). In terms of biological role, catalyzes the attachment of threonine to tRNA(Thr) in a two-step reaction: L-threonine is first activated by ATP to form Thr-AMP and then transferred to the acceptor end of tRNA(Thr). Also edits incorrectly charged L-seryl-tRNA(Thr). This chain is Threonine--tRNA ligase, found in Leptothrix cholodnii (strain ATCC 51168 / LMG 8142 / SP-6) (Leptothrix discophora (strain SP-6)).